Consider the following 302-residue polypeptide: Ectoine dioxygenase (302 aa).

Gln-128 contacts L-ectoine. Lys-134 is a 2-oxoglutarate binding site. His-145, Asp-147, and His-246 together coordinate Fe cation.

The protein belongs to the PhyH family. EctD subfamily. Homodimer. It depends on Fe(2+) as a cofactor.

The enzyme catalyses L-ectoine + 2-oxoglutarate + O2 = 5-hydroxyectoine + succinate + CO2. Its function is as follows. Involved in the biosynthesis of 5-hydroxyectoine, called compatible solute, which helps organisms to survive extreme osmotic stress by acting as a highly soluble organic osmolyte. Catalyzes the 2-oxoglutarate-dependent selective hydroxylation of L-ectoine to yield (4S,5S)-5-hydroxyectoine. This chain is Ectoine dioxygenase, found in Stutzerimonas stutzeri (strain A1501) (Pseudomonas stutzeri).